We begin with the raw amino-acid sequence, 157 residues long: uncharacterized protein (157 aa).

The helical transmembrane segment at 6–26 threads the bilayer; the sequence is LVGGVLRVLVVVGAVFDVAVL. Positions 33-157 constitute a Ricin B-type lectin domain; the sequence is ADGPVQLKSR…APDQQWDSVP (125 aa).

Its subcellular location is the membrane. This is an uncharacterized protein from Mycobacterium tuberculosis (strain CDC 1551 / Oshkosh).